Here is a 925-residue protein sequence, read N- to C-terminus: Neuronal PAS domain-containing protein 3 (925 aa).

A bHLH domain is found at 58–111; it reads LRKEKSRDAARSRRGKENFEFYELAKLLPLPAAITSQLDKASIIRLTISYLKMR. Residues 60 to 71 are DNA-binding; sequence KEKSRDAARSRR. Disordered regions lie at residues 119 to 138 and 219 to 257; these read PPWNLRMEGPPPNTSVKGAQ and LPPGRGLLSQGTTEDAASSASSSSQSETPEPVETTSPSL. The 71-residue stretch at 152 to 222 folds into the PAS 1 domain; sequence EAHLGSHILQ…EQLGMKLPPG (71 aa). Residues 234–256 are compositionally biased toward low complexity; it reads AASSASSSSQSETPEPVETTSPS. Residues 324-394 enclose the PAS 2 domain; that stretch reads PPPTINEVRI…HSHLDLLNKG (71 aa). The 44-residue stretch at 398–441 folds into the PAC domain; that stretch reads TKYYRWMQKNGGYIWIQSSATIAINAKNANEKNIIWVNYLLSNP. 3 disordered regions span residues 457-555, 576-645, and 664-774; these read PEKA…FGAL, PCES…SSPH, and NESS…GASN. Composition is skewed to basic and acidic residues over residues 484-493 and 529-549; these read ENSKSDEKGN and DSRDSDDSFEHSDFEHPKAAE. Positions 601-622 are enriched in basic residues; it reads KHQKRKRRRKRQKGGSASRRRL. The span at 680–690 shows a compositional bias: polar residues; that stretch reads NESPYSMTKPP. Composition is skewed to gly residues over residues 700 to 710 and 760 to 771; these read GQGGSIGGGGA and GGGAGSGGGGPG.

In terms of assembly, efficient DNA binding requires dimerization with another bHLH protein. Interacts with ARNT; forms a heterodimer that binds core DNA sequence 5'-[AG]CGTG-3' within the hypoxia response element (HRE) of target gene promoters. As to expression, detected exclusively in adult brain in inhibitory interneurons.

The protein resides in the nucleus. Its function is as follows. May play a broad role in neurogenesis. May control regulatory pathways relevant to schizophrenia and to psychotic illness. This chain is Neuronal PAS domain-containing protein 3 (Npas3), found in Mus musculus (Mouse).